Reading from the N-terminus, the 437-residue chain is GTPase Obg (437 aa).

An Obg domain is found at 2–160; it reads SMFLDTAKIS…RQLELELKIL (159 aa). Positions 161-338 constitute an OBG-type G domain; it reads ADVGLVGFPS…LLEATAELLA (178 aa). Residues 167-174, 192-196, 214-217, 284-287, and 319-321 contribute to the GTP site; these read GFPSVGKS, FTTIV, DLPG, NKMD, and SSL. Mg(2+) contacts are provided by Ser-174 and Thr-194. The region spanning 359-437 is the OCT domain; it reads GFAETEKDFE…IGKFEFEFVD (79 aa).

This sequence belongs to the TRAFAC class OBG-HflX-like GTPase superfamily. OBG GTPase family. In terms of assembly, monomer. Mg(2+) is required as a cofactor.

It localises to the cytoplasm. In terms of biological role, an essential GTPase which binds GTP, GDP and possibly (p)ppGpp with moderate affinity, with high nucleotide exchange rates and a fairly low GTP hydrolysis rate. Plays a role in control of the cell cycle, stress response, ribosome biogenesis and in those bacteria that undergo differentiation, in morphogenesis control. This Streptococcus pyogenes serotype M1 protein is GTPase Obg.